Consider the following 238-residue polypeptide: Ion-translocating oxidoreductase complex subunit E (238 aa).

The next 6 helical transmembrane spans lie at alanine 24–valine 44, leucine 52–methionine 72, valine 84–methionine 104, glutamate 106–glycine 126, isoleucine 141–isoleucine 161, and glycine 195–alanine 215.

This sequence belongs to the NqrDE/RnfAE family. The complex is composed of six subunits: RnfA, RnfB, RnfC, RnfD, RnfE and RnfG.

The protein resides in the cell inner membrane. Part of a membrane-bound complex that couples electron transfer with translocation of ions across the membrane. The protein is Ion-translocating oxidoreductase complex subunit E of Azotobacter vinelandii (strain DJ / ATCC BAA-1303).